The chain runs to 1021 residues: Sodium/potassium-transporting ATPase subunit alpha-1 (1021 aa).

Residues 1 to 5 constitute a propeptide that is removed on maturation; the sequence is MGKGV. Residues 1–11 show a composition bias toward basic and acidic residues; the sequence is MGKGVGRDKYE. The disordered stretch occupies residues 1–36; that stretch reads MGKGVGRDKYEPAAVSEHGDKKKAKKERDMDELKKE. The Cytoplasmic segment spans residues 4-85; that stretch reads GVGRDKYEPA…NALTPPPTTP (82 aa). Residue K9 is modified to N6-acetyllysine. At Y10 the chain carries Phosphotyrosine. Residue S16 is modified to Phosphoserine; by PKC. Position 21 is an N6-acetyllysine (K21). Over residues 26–36 the composition is skewed to basic and acidic residues; sequence KERDMDELKKE. Phosphoserine is present on residues S38 and S45. The segment at 80-82 is phosphoinositide-3 kinase binding; it reads PPP. The chain crosses the membrane as a helical span at residues 86–106; sequence EWVKFCRQLFGGFSMLLWIGA. Over 107–129 the chain is Extracellular; it reads ILCFLAYGIQAATEEEPQNDNLY. Residues 130-150 traverse the membrane as a helical segment; sequence LGVVLSAVVIITGCFSYYQEA. Topologically, residues 151–286 are cytoplasmic; it reads KSSKIMESFK…GGQTPIAAEI (136 aa). The disordered stretch occupies residues 214 to 233; sequence SSLTGESEPQTRSPDFTNEN. Residue S226 is modified to Phosphoserine. Position 258 is a phosphotyrosine (Y258). Residues 287 to 306 form a helical membrane-spanning segment; the sequence is EHFIHIITGVAVFLGVSFFI. Over 307–318 the chain is Extracellular; the sequence is LSLILEYTWLEA. Residues 319 to 336 form a helical membrane-spanning segment; it reads VIFLIGIIVANVPEGLLA. The Cytoplasmic portion of the chain corresponds to 337-770; the sequence is TVTVCLTLTA…EEGRLIFDNL (434 aa). D374 acts as the 4-aspartylphosphate intermediate in catalysis. Phosphoserine is present on residues S450 and S482. K485 is a binding site for ATP. A Phosphotyrosine modification is found at Y540. Residues 594–715 form a mediates interaction with SCN7A region; it reads RAAVPDAVGK…QGAIVAVTGD (122 aa). At K659 the chain carries N6-succinyllysine. Phosphoserine is present on residues S666 and S673. Mg(2+) contacts are provided by D715 and D719. A helical transmembrane segment spans residues 771 to 790; that stretch reads KKSIAYTLTSNIPEITPFLI. The Extracellular portion of the chain corresponds to 791–800; sequence FIIANIPLPL. Residues 801–821 traverse the membrane as a helical segment; it reads GTVTILCIDLGTDMVPAISLA. Over 822-841 the chain is Cytoplasmic; sequence YEQAESDIMKRQPRNPKTDK. Residues 842–864 form a helical membrane-spanning segment; it reads LVNERLISMAYGQIGMIQALGGF. Over 865-916 the chain is Extracellular; the sequence is FTYFVILAENGFLPTHLLGLRVDWDDRWINDVEDSYGQQWTYEQRKIVEFTC. Residues 917-936 traverse the membrane as a helical segment; it reads HTAFFVSIVVVQWADLVICK. Residues 937–949 lie on the Cytoplasmic side of the membrane; the sequence is TRRNSVFQQGMKN. S941 is modified (phosphoserine; by PKA). Residues 950–968 traverse the membrane as a helical segment; that stretch reads KILIFGLFEETALAAFLSY. At 969–983 the chain is on the extracellular side; it reads CPGMGVALRMYPLKP. The chain crosses the membrane as a helical span at residues 984–1004; it reads TWWFCAFPYSLLIFVYDEVRK. At 1005 to 1021 the chain is on the cytoplasmic side; that stretch reads LIIRRRPGGWVEKETYY.

The protein belongs to the cation transport ATPase (P-type) (TC 3.A.3) family. Type IIC subfamily. The sodium/potassium-transporting ATPase is composed of a catalytic alpha subunit, an auxiliary non-catalytic beta subunit and an additional regulatory subunit. Interacts with regulatory subunit FXYD1. Interacts with regulatory subunit FXYD3. Interacts with SIK1. Interacts with SLC35G1 and STIM1. Interacts with CLN3; this interaction regulates the sodium/potassium-transporting ATPase complex localization at the plasma membrane. Interacts with SCN7A; activates ATP1A1 P-type sodium:potassium-exchanging transporter activity which indirectly signals to nearby neurons to regulate sodium homeostasis. Phosphorylation on Tyr-10 modulates pumping activity. Phosphorylation of Ser-941 by PKA modulates the response of ATP1A1 to PKC. Dephosphorylation by protein phosphatase 2A (PP2A) following increases in intracellular sodium, leading to increase catalytic activity.

The protein resides in the cell membrane. The protein localises to the basolateral cell membrane. It localises to the sarcolemma. It is found in the cell projection. Its subcellular location is the axon. The protein resides in the melanosome. It catalyses the reaction K(+)(out) + Na(+)(in) + ATP + H2O = K(+)(in) + Na(+)(out) + ADP + phosphate + H(+). In terms of biological role, this is the catalytic component of the active enzyme, which catalyzes the hydrolysis of ATP coupled with the exchange of sodium and potassium ions across the plasma membrane. This action creates the electrochemical gradient of sodium and potassium ions, providing the energy for active transport of various nutrients. Could also be part of an osmosensory signaling pathway that senses body-fluid sodium levels and controls salt intake behavior as well as voluntary water intake to regulate sodium homeostasis. This is Sodium/potassium-transporting ATPase subunit alpha-1 (ATP1A1) from Canis lupus familiaris (Dog).